A 122-amino-acid chain; its full sequence is UPF0102 protein BQ09720 (122 aa).

Belongs to the UPF0102 family.

This chain is UPF0102 protein BQ09720, found in Bartonella quintana (strain Toulouse) (Rochalimaea quintana).